Reading from the N-terminus, the 154-residue chain is Protein X (154 aa).

The tract at residues 68–117 (PCALRFTSARCMETTVNAPRNLPKVLHKRTLGLSAMSTTKIETYFKDCVF) is mitochondrial targeting sequence.

The protein belongs to the orthohepadnavirus protein X family. May form homodimer. May interact with host CEBPA, CFLAR, CREB1, DDB1, E4F1, HBXIP, HSPD1/HSP60, NFKBIA, POLR2E and SMAD4. Interacts with host SMC5-SMC6 complex and induces its degradation. Interacts with host TRPC4AP; leading to prevent ubiquitination of TRPC4AP. Interacts with host PLSCR1; this interaction promotes ubiquitination and degradation of HBx and impairs HBx-mediated cell proliferation. In terms of processing, a fraction may be phosphorylated in insect cells and HepG2 cells, a human hepatoblastoma cell line. Phosphorylated in vitro by host protein kinase C or mitogen-activated protein kinase. N-acetylated in insect cells.

It localises to the host cytoplasm. The protein resides in the host nucleus. Its subcellular location is the host mitochondrion. Functionally, multifunctional protein that plays a role in silencing host antiviral defenses and promoting viral transcription. Does not seem to be essential for HBV infection. May be directly involved in development of cirrhosis and liver cancer (hepatocellular carcinoma). Most of cytosolic activities involve modulation of cytosolic calcium. The effect on apoptosis is controversial depending on the cell types in which the studies have been conducted. May induce apoptosis by localizing in mitochondria and causing loss of mitochondrial membrane potential. May also modulate apoptosis by binding host CFLAR, a key regulator of the death-inducing signaling complex (DISC). Promotes viral transcription by using the host E3 ubiquitin ligase DDB1 to target the SMC5-SMC6 complex to proteasomal degradation. This host complex would otherwise bind to viral episomal DNA, and prevents its transcription. Moderately stimulates transcription of many different viral and cellular transcription elements. Promoters and enhancers stimulated by HBx contain DNA binding sites for NF-kappa-B, AP-1, AP-2, c-EBP, ATF/CREB, or the calcium-activated factor NF-AT. This Chimpanzee hepatitis B virus (isolate United Kingdom/LSH/1988) (HBVcpz) protein is Protein X.